Consider the following 118-residue polypeptide: Large ribosomal subunit protein uL18 (118 aa).

Belongs to the universal ribosomal protein uL18 family. As to quaternary structure, part of the 50S ribosomal subunit; part of the 5S rRNA/L5/L18/L25 subcomplex. Contacts the 5S and 23S rRNAs.

Functionally, this is one of the proteins that bind and probably mediate the attachment of the 5S RNA into the large ribosomal subunit, where it forms part of the central protuberance. The polypeptide is Large ribosomal subunit protein uL18 (Cupriavidus pinatubonensis (strain JMP 134 / LMG 1197) (Cupriavidus necator (strain JMP 134))).